The sequence spans 375 residues: Porin Omp2b (375 aa).

The N-terminal stretch at 1 to 22 is a signal peptide; the sequence is MNIKSLLLGSAAALVAASGAQA.

The protein belongs to the alphaproteobacteria porin family. Homotrimer.

It is found in the cell outer membrane. Its function is as follows. Forms passive diffusion pores that allow small molecular weight hydrophilic materials across the outer membrane. The polypeptide is Porin Omp2b (omp2b) (Brucella suis).